Here is an 803-residue protein sequence, read N- to C-terminus: MTVSFENKDFNQFINSSKFLVEYDVMSALKQEGLKQSDYVEICRRLNRGPNRNELGMFGVMWSEHCCYRNSRPLLKNLPTTGSRILVGPGENAGVVDIGFGQRLVFKIESHNHPSAVEPFQGAATGVGGILRDIFTMGARPIALLNALRFGPLDDEKNISLLEGVVAGISHYGNCVGVPTIGGEVGFDSSYSGNPLVNVMGLGLMETEEIVCSGASGIDFPVLYVGNTTGRDGMGGASFASSELSKTSIDDRPAVQVGDPFLEKGLIEACLEAFKTGYVIAAQDMGAAGLTCSCSEMASKGEVGIELNLDLVPAREKGMTAYEFLLSESQERMLFVVKPGSEEELRELFIRWGLYVEVVGKVLKEKVVRVIHKGEVVANLPASALADDTPIEEHLLINSTPEYLQEHWKWTEDLLPKTLDNGIINIKNNLFISWNNVLLDLLSMPSIASKNWIYKQYDYQVQSNTVVSPGEADAAVIRIRSQNDFLTKPKKDRGIASVVDCNDRWVYLDPLRGSMSAVAEAARNLSSVGAEPIAITNNLNFSSPDKPVGFWQLSMSCEGITKACLALSTPVTGGNVSLYNDTKLQNNTVLPIHPTPVIGMVGLIEDINKICKKSWVKAEDQIWMIGLPLENNINQDERISLSASSFLEYIHGLKTGRPPEIDLNLEKQVHAFLREVIKQGIVNSAHDLGDGGLAVAIAECCISSGYGANIILPPSQSRLDRLLFAEGGARVLVSCSTDQSEELKKYYKNISLQGSNLFSISHLGNVNNQKKLLVSQSNNTIIDVNILDLKDTYKDAIHKKITK.

The active site involves H65. ATP-binding residues include Y68 and K107. E109 contacts Mg(2+). Residues 110–113 (SHNH) and R132 each bind substrate. H111 (proton acceptor) is an active-site residue. D133 serves as a coordination point for Mg(2+). Substrate is bound at residue Q256. A Mg(2+)-binding site is contributed by D284. Residue 328-330 (ESQ) participates in substrate binding. ATP contacts are provided by N537 and G574. Position 575 (N575) interacts with Mg(2+). A substrate-binding site is contributed by S577.

This sequence belongs to the FGAMS family. In terms of assembly, monomer. Part of the FGAM synthase complex composed of 1 PurL, 1 PurQ and 2 PurS subunits.

It is found in the cytoplasm. The catalysed reaction is N(2)-formyl-N(1)-(5-phospho-beta-D-ribosyl)glycinamide + L-glutamine + ATP + H2O = 2-formamido-N(1)-(5-O-phospho-beta-D-ribosyl)acetamidine + L-glutamate + ADP + phosphate + H(+). It participates in purine metabolism; IMP biosynthesis via de novo pathway; 5-amino-1-(5-phospho-D-ribosyl)imidazole from N(2)-formyl-N(1)-(5-phospho-D-ribosyl)glycinamide: step 1/2. Part of the phosphoribosylformylglycinamidine synthase complex involved in the purines biosynthetic pathway. Catalyzes the ATP-dependent conversion of formylglycinamide ribonucleotide (FGAR) and glutamine to yield formylglycinamidine ribonucleotide (FGAM) and glutamate. The FGAM synthase complex is composed of three subunits. PurQ produces an ammonia molecule by converting glutamine to glutamate. PurL transfers the ammonia molecule to FGAR to form FGAM in an ATP-dependent manner. PurS interacts with PurQ and PurL and is thought to assist in the transfer of the ammonia molecule from PurQ to PurL. The polypeptide is Phosphoribosylformylglycinamidine synthase subunit PurL (Prochlorococcus marinus (strain NATL1A)).